Consider the following 408-residue polypeptide: MTDTLVLAYSGGLDTSVAIPWLKDKGYDVIAVVLDVGQHGKNLNEIQAKALKVGAKQSIVIDAKAEFADKYVAPVIKANMMYEGEYPMVSALSRPLIIKKLVDIAHENDAVAIAHGSTGHGNDQVRFEAAIHALDPDMKIEAPIRDFQWSREEEIQYAQEHDVPVPIDLDSPYSIDENLWGRANEAGILENPWNQAPEDAFALTTAIEDAPDTPEFIDVTFEAGVPVALNGEVLSLEKLIVAVNEIAGKHGIGRIDHIENRLVGIKSREIYEAPAAAVLMTAHKDLEDLTLERDVAHFKPIVEQQLANLVYEAKWVSPLFDSLMAFIDSTQQNVNGVVKMKLFKGNATAVARQSEHNSLYDEDLATYTSSSSFDQASAVGFIKLWTLSNTVYEQVNHVHSQAKKNTVK.

An ATP-binding site is contributed by 8–16; the sequence is AYSGGLDTS. Y86 lines the L-citrulline pocket. G116 is an ATP binding site. Residues T118, N122, and D123 each coordinate L-aspartate. L-citrulline is bound at residue N122. L-citrulline contacts are provided by R126, S174, E259, and Y271.

It belongs to the argininosuccinate synthase family. Type 1 subfamily. In terms of assembly, homotetramer.

The protein resides in the cytoplasm. It catalyses the reaction L-citrulline + L-aspartate + ATP = 2-(N(omega)-L-arginino)succinate + AMP + diphosphate + H(+). Its pathway is amino-acid biosynthesis; L-arginine biosynthesis; L-arginine from L-ornithine and carbamoyl phosphate: step 2/3. The protein is Argininosuccinate synthase of Leuconostoc mesenteroides subsp. mesenteroides (strain ATCC 8293 / DSM 20343 / BCRC 11652 / CCM 1803 / JCM 6124 / NCDO 523 / NBRC 100496 / NCIMB 8023 / NCTC 12954 / NRRL B-1118 / 37Y).